Here is a 469-residue protein sequence, read N- to C-terminus: Protein HEAT STRESS TOLERANT DWD 1 (469 aa).

Basic residues predominate over residues 1-15; the sequence is MGRNVKTKAKRKNKK. 2 disordered regions span residues 1-29 and 115-150; these read MGRN…SIPT and DVVP…KTPN. Residues 124 to 143 are compositionally biased toward acidic residues; the sequence is GEDEDEDDEDDSDSDDDDGD. 6 WD repeats span residues 157–197, 221–261, 267–307, 311–351, 358–398, and 425–464; these read AHHG…NALA, GHKD…WAVD, GHTA…SPAL, AHNA…GGDA, YHKH…DEEE, and QGQK…NTLP.

Belongs to the WD repeat RBAP46/RBAP48/MSI1 family. In terms of assembly, probable component of CULLIN4 (CUL4) RING ligase (CRL4) complexes. Interacts with DDB1A and DDB1B. Associates with HSP90-1.

It participates in protein modification; protein ubiquitination. Probable substrate receptor of CRL4 E3 ligase complexes acting as negative regulators of thermotolerance by disturbing the action of HSP90-1 and by preventing the expression of heat-inducible genes (e.g. HSP14.7, HSP21, At2g03020 and WRKY28). The protein is Protein HEAT STRESS TOLERANT DWD 1 of Arabidopsis thaliana (Mouse-ear cress).